Here is a 315-residue protein sequence, read N- to C-terminus: NAD-dependent protein deacylase sirtuin-5, mitochondrial (315 aa).

A mitochondrion-targeting transit peptide spans 1–39 (MSLLHFATRRLILQVLRELGLKAPPVHKTLKICIAMSRP). One can recognise a Deacetylase sirtuin-type domain in the interval 40-312 (SSNMADFRRF…PEALSPHESE (273 aa)). 61-80 (GAGVSAESGVPTFRGPGGFW) lines the NAD(+) pocket. Tyr-105 and Arg-108 together coordinate substrate. Position 143-146 (143-146 (QNID)) interacts with NAD(+). His-161 acts as the Proton acceptor in catalysis. NAD(+) is bound by residues 254 to 256 (GTS), 280 to 282 (NTV), and Cys-298.

The protein belongs to the sirtuin family. Class III subfamily. Monomer. Homodimer. Interacts with CPS1.

Its subcellular location is the mitochondrion. The protein resides in the cytoplasm. It localises to the cytosol. The protein localises to the nucleus. The catalysed reaction is N(6)-malonyl-L-lysyl-[protein] + NAD(+) + H2O = 2''-O-malonyl-ADP-D-ribose + nicotinamide + L-lysyl-[protein]. The enzyme catalyses N(6)-succinyl-L-lysyl-[protein] + NAD(+) + H2O = 2''-O-succinyl-ADP-D-ribose + nicotinamide + L-lysyl-[protein]. It catalyses the reaction N(6)-glutaryl-L-lysyl-[protein] + NAD(+) + H2O = 2''-O-glutaryl-ADP-D-ribose + nicotinamide + L-lysyl-[protein]. In terms of biological role, NAD-dependent lysine demalonylase, desuccinylase and deglutarylase that specifically removes malonyl, succinyl and glutaryl groups on target proteins. Activates CPS1 and contributes to the regulation of blood ammonia levels during prolonged fasting: acts by mediating desuccinylation and deglutarylation of CPS1, thereby increasing CPS1 activity in response to elevated NAD levels during fasting. Activates SOD1 by mediating its desuccinylation, leading to reduced reactive oxygen species. Activates SHMT2 by mediating its desuccinylation. Modulates ketogenesis through the desuccinylation and activation of HMGCS2. Has weak NAD-dependent protein deacetylase activity; however this activity may not be physiologically relevant in vivo. Can deacetylate cytochrome c (CYCS) and a number of other proteins in vitro such as UOX. This Monodelphis domestica (Gray short-tailed opossum) protein is NAD-dependent protein deacylase sirtuin-5, mitochondrial.